Reading from the N-terminus, the 137-residue chain is L-ectoine synthase (137 aa).

Residues 118 to 137 (VHREDGSYAPADEADDQKPL) form a disordered region.

This sequence belongs to the ectoine synthase family.

The catalysed reaction is (2S)-4-acetamido-2-aminobutanoate = L-ectoine + H2O. Its pathway is amine and polyamine biosynthesis; ectoine biosynthesis; L-ectoine from L-aspartate 4-semialdehyde: step 3/3. Its activity is regulated as follows. Seems to require potassium ions for its activity and stability. Slightly inhibited by N-ethylmaleimide. Catalyzes the circularization of gamma-N-acetyl-alpha,gamma-diaminobutyric acid (ADABA) to ectoine (1,4,5,6-tetrahydro-2-methyl-4-pyrimidine carboxylic acid), which is an excellent osmoprotectant. Does not act on N-acetylated amino acids like N-alpha-acetyl-L-asparagine,N-alpha-acetyl-L-ornithine, N-alpha-acetyl-L-lysine and N-epsilon-acetyl-L-lysine. The protein is L-ectoine synthase (ectC) of Halomonas elongata (strain ATCC 33173 / DSM 2581 / NBRC 15536 / NCIMB 2198 / 1H9).